The primary structure comprises 340 residues: Methionine import ATP-binding protein MetN 1 (340 aa).

The region spanning 2–242 (IRLENVSVDF…PQHAYTKQLV (241 aa)) is the ABC transporter domain. 39–46 (GTSGAGKS) lines the ATP pocket.

This sequence belongs to the ABC transporter superfamily. Methionine importer (TC 3.A.1.24) family. In terms of assembly, the complex is composed of two ATP-binding proteins (MetN), two transmembrane proteins (MetI) and a solute-binding protein (MetQ).

It localises to the cell inner membrane. The enzyme catalyses L-methionine(out) + ATP + H2O = L-methionine(in) + ADP + phosphate + H(+). It catalyses the reaction D-methionine(out) + ATP + H2O = D-methionine(in) + ADP + phosphate + H(+). Part of the ABC transporter complex MetNIQ involved in methionine import. Responsible for energy coupling to the transport system. This Pectobacterium atrosepticum (strain SCRI 1043 / ATCC BAA-672) (Erwinia carotovora subsp. atroseptica) protein is Methionine import ATP-binding protein MetN 1.